Here is a 1906-residue protein sequence, read N- to C-terminus: Myosin light chain kinase, smooth muscle (1906 aa).

Ig-like C2-type domains lie at 28–117 and 156–244; these read PAFT…VELT and PKFA…AELT. Disordered regions lie at residues 127-157 and 309-453; these read SLPSSAKTPGGRLSVPPVEHRPSIWGESPPK and ETFY…SKVS. Residues 309 to 321 show a composition bias toward basic and acidic residues; sequence ETFYTSREAKDGK. Composition is skewed to polar residues over residues 345-354 and 384-402; these read LQKTSSTITL and PLMTTTTQENPSLTGQVSP. The segment covering 403–424 has biased composition (basic and acidic residues); it reads RSRETENRAGVRKSVKEEKREP. Ig-like C2-type domains are found at residues 429–517, 521–613, 637–725, and 735–830; these read PQFE…WLLT, PKVE…AQVT, PIFL…ATLT, and PWFI…SSAS. The stretch at 660–676 is one IIA-1 repeat; sequence VSANPCPEIIWLHNGKE. A 4 X repeats, motif IIA region spans residues 660–1833; it reads VSANPCPEII…EVMWYKDDQP (1174 aa). The stretch at 693–708 is one IIB-1 repeat; the sequence is SLYIQEVFPEDTGKYT. The segment at 693-1866 is 5 X repeats, motif IIB; that stretch reads SLYIQEVFPE…VCGDDDAKYT (1174 aa). One copy of the IIA-2 repeat lies at 758–774; the sequence is IAGDPFPTVHWFKDGQE. Residues 791 to 807 form an IIB-2 repeat; sequence TLILRNVQSRHAGQYEI. Disordered regions lie at residues 831 to 881 and 947 to 1086; these read RAEM…QEDV and PKTL…APSF. 2 stretches are compositionally biased toward basic and acidic residues: residues 833–850 and 867–881; these read EMLRDGRESASSGERRDG and SSSETRAAEEEQEDV. One copy of the III-1 repeat lies at 970–987; sequence AKKGTPKTPLPEKVPPPK. A 4 X repeats, motif III region spans residues 970–1226; the sequence is AKKGTPKTPL…TPPKAATPPQ (257 aa). Positions 977–988 are enriched in pro residues; sequence TPLPEKVPPPKP. The III-2 repeat unit spans residues 999–1016; sequence AKKKPPAENGSASTPAPN. The span at 1039-1051 shows a compositional bias: basic and acidic residues; the sequence is VKKEEKNDRKCEH. One copy of the III-3 repeat lies at 1061–1078; that stretch reads IGKKAENKPAASKPTPPP. 2 consecutive Ig-like C2-type domains span residues 1084 to 1172 and 1225 to 1313; these read PSFT…CKVL and PQIT…VNLT. An IIA-3 repeat occupies 1107-1123; it reads ISSDPPASVSWTLDSKA. The IIB-3 repeat unit spans residues 1140 to 1156; sequence SLTIEKVMPEDGGEYKC. The segment at 1180–1227 is disordered; the sequence is KAAKPAEKKTKKPKTTLPPVLSTESSEATVKKKPAPKTPPKAATPPQI. One copy of the III-4 repeat lies at 1209-1226; the sequence is VKKKPAPKTPPKAATPPQ. The stretch at 1281–1297 is one IIB-4 repeat; it reads KLTISSTKQEHCGCYTL. The interval 1317–1364 is motif IA; it reads KPDPPAGTPCASDIRSSSLTLSWYGSSYDGGSAVQSYTVEIWNSVDNK. One can recognise a Fibronectin type-III domain in the interval 1321 to 1414; it reads PAGTPCASDI…ESEVVKVGEK (94 aa). Residues 1385-1402 form a motif IB region; the sequence is REYKFRVRAANVYGISEP. The tract at residues 1414–1433 is disordered; it reads KQEEELKEEEAELSDDEGKE. Residues 1415 to 1432 show a composition bias toward acidic residues; the sequence is QEEELKEEEAELSDDEGK. In terms of domain architecture, Protein kinase spans 1453–1708; that stretch reads YNIEERLGSG…CTQCLQHPWL (256 aa). ATP is bound by residues 1459-1467 and lysine 1482; that span reads LGSGKFGQV. Aspartate 1574 acts as the Proton acceptor in catalysis. The segment at 1700–1763 is calmodulin-binding; that stretch reads TQCLQHPWLQ…SGMSGRKASG (64 aa). A calmodulin autoinhibition (AM13) region region spans residues 1716-1728; that stretch reads EAKKLSKDRMKKY. Residues 1730–1749 form a calmodulin recognition (RS20) region region; sequence ARRKWQKTGHAVRAIGRLSS. Position 1762 is a phosphoserine; by PKG (serine 1762). At serine 1768 the chain carries Phosphoserine; by MAPK. The Ig-like C2-type 9 domain occupies 1794 to 1885; it reads PYFTKTILDM…ATCTAELLVE (92 aa). One copy of the IIA-4 repeat lies at 1817-1833; the sequence is IEGYPDPEVMWYKDDQP. Residues 1851 to 1866 form an IIB-5 repeat; the sequence is SLTISEVCGDDDAKYT. The tract at residues 1885 to 1906 is disordered; that stretch reads ETMGKEGEGEGEGEEDEEEEEE. Acidic residues predominate over residues 1893–1906; the sequence is GEGEGEEDEEEEEE.

Belongs to the protein kinase superfamily. CAMK Ser/Thr protein kinase family. All isoforms including Telokin bind calmodulin. Mg(2+) serves as cofactor. It depends on Ca(2+) as a cofactor. In terms of processing, the C-terminus is deglutamylated, leading to the formation of Myosin light chain kinase, smooth muscle, deglutamylated form. The C-terminus is variable, with one to five C-terminal glutamyl residues being removed producing five forms differring in their number of C-terminal glutamyl residues. Post-translationally, acetylated. Phosphorylation of telokin by PKG has no significant effect on its myosin binding activity, but promotes translocation to the membrane. In terms of tissue distribution, isoform telokin is expressed in gizzard, heart, lung, intestine, and skeletal muscle although the levels of the expression in the latter were much less than that in the gizzard.

It localises to the cytoplasm. Its subcellular location is the cytosol. It is found in the membrane. The enzyme catalyses L-seryl-[myosin light chain] + ATP = O-phospho-L-seryl-[myosin light chain] + ADP + H(+). It carries out the reaction L-threonyl-[myosin light chain] + ATP = O-phospho-L-threonyl-[myosin light chain] + ADP + H(+). Activated by phosphorylation on Tyr-478. Isoforms which lack this tyrosine residue are not regulated in this way. All catalytically active isoforms require binding to calcium and calmodulin for activation. Its function is as follows. Phosphorylates a specific serine in the N-terminus of a myosin light chain, which leads to the formation of calmodulin/MLCK signal transduction complexes which allow selective transduction of calcium signals. The protein is Myosin light chain kinase, smooth muscle (Mylk) of Gallus gallus (Chicken).